The sequence spans 319 residues: Zinc metalloproteinase/disintegrin (319 aa).

Positions 1-28 (EDEAPKMCGVTQNWESYEPIKKASQSNL) are excised as a propeptide. Residues 34–230 (RYIELVIVAD…QKPQCILNKP (197 aa)) form the Peptidase M12B domain. Ca(2+)-binding residues include E37 and D121. 3 disulfides stabilise this stretch: C145/C225, C185/C209, and C187/C192. H170 is a Zn(2+) binding site. E171 is a catalytic residue. Residues H174 and H180 each coordinate Zn(2+). C225 and N228 together coordinate Ca(2+). Residues 231–246 (LRTDTVSTPVSGNELL) constitute a propeptide that is removed on maturation. The Disintegrin domain maps to 238 to 319 (TPVSGNELLE…AGCPRNPFHA (82 aa)). Disulfide bonds link C252-C267, C254-C262, C261-C284, C275-C281, C280-C305, and C293-C312. The short motif at 297–299 (RGD) is the Cell attachment site element.

The protein belongs to the venom metalloproteinase (M12B) family. P-II subfamily. P-IIa sub-subfamily. Monomer. Zn(2+) serves as cofactor. In terms of tissue distribution, expressed by the venom gland.

The protein localises to the secreted. Its activity is regulated as follows. Excess of calcium ions significantly suppress the autoproteolysis of the enzyme. Metalloproteinase that impairs hemostasis in the envenomed animal. Shows autoproteolysis dependent on pH and temperature. Does not show hemorrhagic activity. Functionally, inhibits platelet aggregation induced by ADP (IC(50) is 200 nM), collagen (IC(50) is 500 nM), thrombin and epinephrin (IC(50) is 300 nM). Does not inhibit aggregation induced by ristocetin. In terms of biological role, inhibits platelet aggregation induced by ADP (IC(50) is 100 nM), collagen (IC(50) is 500 nM), thrombin and epinephrin (IC(50) is 300 nM). Does not inhibit aggregation induced by ristocetin. Significantly inhibits angiogenesis both in vivo and in vitro. In Gloydius brevicauda (Korean slamosa snake), this protein is Zinc metalloproteinase/disintegrin.